Consider the following 477-residue polypeptide: Chaperonin GroEL 2 (477 aa).

Residues Thr29 to Pro32, Asp86 to Thr90, and Gly416 each bind ATP.

Belongs to the chaperonin (HSP60) family. In terms of assembly, forms a cylinder of 14 subunits composed of two heptameric rings stacked back-to-back. Interacts with the co-chaperonin GroES.

It is found in the cytoplasm. The catalysed reaction is ATP + H2O + a folded polypeptide = ADP + phosphate + an unfolded polypeptide.. Its function is as follows. Together with its co-chaperonin GroES, plays an essential role in assisting protein folding. The GroEL-GroES system forms a nano-cage that allows encapsulation of the non-native substrate proteins and provides a physical environment optimized to promote and accelerate protein folding. The polypeptide is Chaperonin GroEL 2 (Streptomyces lividans).